A 350-amino-acid polypeptide reads, in one-letter code: (S)-tetrahydroprotoberberine N-methyltransferase (350 aa).

7 residues coordinate S-adenosyl-L-methionine: Ser-91, Gly-129, Asn-153, Gln-157, Asp-179, Val-180, and Val-195. Cys-325 is a catalytic residue.

Belongs to the CFA/CMAS family. As to quaternary structure, homodimer.

Its subcellular location is the cytoplasm. It carries out the reaction (S)-stylopine + S-adenosyl-L-methionine = (S)-cis-N-methylstylopine + S-adenosyl-L-homocysteine. The catalysed reaction is (S)-tetrahydropalmatine + S-adenosyl-L-methionine = (S)-cis-N-methyltetrahydropalmatine + S-adenosyl-L-homocysteine. The enzyme catalyses (S)-canadine + S-adenosyl-L-methionine = (S)-cis-N-methylcanadine + S-adenosyl-L-homocysteine. It catalyses the reaction (S)-scoulerine + S-adenosyl-L-methionine = (S)-cis-N-methylscoulerine + S-adenosyl-L-homocysteine. Its pathway is alkaloid biosynthesis. Its function is as follows. N-methyltransferase with a broad substrate range, accepting protoberberine alkaloids (R,S)-stylopine, (R,S)-nandinine and (R,S)-tetrahydropalmatine, and to a lesser extent (R,S)-canadine, (R,S)-tetrahydrogroenlandicine (cheilanthifoline) and (S)-scoulerine. The polypeptide is (S)-tetrahydroprotoberberine N-methyltransferase (Eschscholzia californica (California poppy)).